The sequence spans 535 residues: F-box protein At1g56610 (535 aa).

The next 3 membrane-spanning stretches (helical) occupy residues 3–23 (FALV…SSSI), 37–57 (VLLL…LCLF), and 82–102 (LAPH…SLLF). Residues 73–119 (TELCDLPKCLAPHILSWLPTKTAVTVSLLFMKGWWRSEMKNLSSLKF) enclose the F-box; degenerate domain.

Part of a SCF (ASK-cullin-F-box) protein ligase complex. Interacts with ASK4.

It is found in the membrane. It participates in protein modification; protein ubiquitination. Component of SCF(ASK-cullin-F-box) E3 ubiquitin ligase complexes, which may mediate the ubiquitination and subsequent proteasomal degradation of target proteins. This chain is F-box protein At1g56610, found in Arabidopsis thaliana (Mouse-ear cress).